The chain runs to 418 residues: Tyrosine--tRNA ligase (418 aa).

Tyr34 contributes to the L-tyrosine binding site. Positions 39–48 (PTADSLHLGH) match the 'HIGH' region motif. Residues Tyr169 and Gln173 each coordinate L-tyrosine. The short motif at 229-233 (KFGKS) is the 'KMSKS' region element. Lys232 contacts ATP. The 67-residue stretch at 352 to 418 (LNIVDMLVTA…GKKKYAVLTY (67 aa)) folds into the S4 RNA-binding domain.

Belongs to the class-I aminoacyl-tRNA synthetase family. TyrS type 1 subfamily. Homodimer.

The protein resides in the cytoplasm. The enzyme catalyses tRNA(Tyr) + L-tyrosine + ATP = L-tyrosyl-tRNA(Tyr) + AMP + diphosphate + H(+). Functionally, catalyzes the attachment of tyrosine to tRNA(Tyr) in a two-step reaction: tyrosine is first activated by ATP to form Tyr-AMP and then transferred to the acceptor end of tRNA(Tyr). This Streptococcus equi subsp. equi (strain 4047) protein is Tyrosine--tRNA ligase.